The chain runs to 165 residues: GTP-dependent dephospho-CoA kinase (165 aa).

The GTP site is built by Asp-44, Val-45, Asp-63, Lys-65, Glu-115, and Asp-138.

Belongs to the GTP-dependent DPCK family.

It catalyses the reaction 3'-dephospho-CoA + GTP = GDP + CoA + H(+). Its pathway is cofactor biosynthesis; coenzyme A biosynthesis. In terms of biological role, catalyzes the GTP-dependent phosphorylation of the 3'-hydroxyl group of dephosphocoenzyme A to form coenzyme A (CoA). In Picrophilus torridus (strain ATCC 700027 / DSM 9790 / JCM 10055 / NBRC 100828 / KAW 2/3), this protein is GTP-dependent dephospho-CoA kinase.